Here is a 147-residue protein sequence, read N- to C-terminus: Ubiquitin-conjugating enzyme E2 4 (147 aa).

Residues 1–147 (MSLKRINKEL…AKEWTKKYAV (147 aa)) form the UBC core domain. Cysteine 85 (glycyl thioester intermediate) is an active-site residue.

Belongs to the ubiquitin-conjugating enzyme family.

It carries out the reaction S-ubiquitinyl-[E1 ubiquitin-activating enzyme]-L-cysteine + [E2 ubiquitin-conjugating enzyme]-L-cysteine = [E1 ubiquitin-activating enzyme]-L-cysteine + S-ubiquitinyl-[E2 ubiquitin-conjugating enzyme]-L-cysteine.. The protein operates within protein modification; protein ubiquitination. In terms of biological role, E2 ubiquitin-conjugating enzyme that catalyzes the covalent attachment of ubiquitin to other proteins. Mediates the selective degradation of short-lived and abnormal proteins. Mediates ubiquitination of PEX5. The protein is Ubiquitin-conjugating enzyme E2 4 (UBC4) of Candida albicans (Yeast).